The chain runs to 149 residues: Nucleoside diphosphate kinase (149 aa).

ATP-binding residues include K9, F57, R85, T91, R102, and N112. H115 (pros-phosphohistidine intermediate) is an active-site residue.

It belongs to the NDK family. As to quaternary structure, homotetramer. Requires Mg(2+) as cofactor.

It is found in the cytoplasm. It catalyses the reaction a 2'-deoxyribonucleoside 5'-diphosphate + ATP = a 2'-deoxyribonucleoside 5'-triphosphate + ADP. It carries out the reaction a ribonucleoside 5'-diphosphate + ATP = a ribonucleoside 5'-triphosphate + ADP. In terms of biological role, major role in the synthesis of nucleoside triphosphates other than ATP. The ATP gamma phosphate is transferred to the NDP beta phosphate via a ping-pong mechanism, using a phosphorylated active-site intermediate. This chain is Nucleoside diphosphate kinase, found in Staphylococcus aureus (strain MSSA476).